Reading from the N-terminus, the 315-residue chain is Methionyl-tRNA formyltransferase (315 aa).

114–117 (SLLP) is a binding site for (6S)-5,6,7,8-tetrahydrofolate.

The protein belongs to the Fmt family.

The enzyme catalyses L-methionyl-tRNA(fMet) + (6R)-10-formyltetrahydrofolate = N-formyl-L-methionyl-tRNA(fMet) + (6S)-5,6,7,8-tetrahydrofolate + H(+). In terms of biological role, attaches a formyl group to the free amino group of methionyl-tRNA(fMet). The formyl group appears to play a dual role in the initiator identity of N-formylmethionyl-tRNA by promoting its recognition by IF2 and preventing the misappropriation of this tRNA by the elongation apparatus. The sequence is that of Methionyl-tRNA formyltransferase from Corynebacterium efficiens (strain DSM 44549 / YS-314 / AJ 12310 / JCM 11189 / NBRC 100395).